Reading from the N-terminus, the 354-residue chain is Cyclin-D1-2 (354 aa).

2 disordered regions span residues 37 to 74 (FFQQ…EEEE) and 331 to 354 (TTAT…RRKM). 2 stretches are compositionally biased toward low complexity: residues 44 to 66 (PAPA…AGSC) and 331 to 346 (TTAT…VSSS).

It belongs to the cyclin family. Cyclin D subfamily.

The chain is Cyclin-D1-2 (CYCD1-2) from Oryza sativa subsp. japonica (Rice).